The primary structure comprises 93 residues: Antitoxin RelF (93 aa).

This sequence belongs to the phD/YefM antitoxin family. Interacts with toxin RelG, which neutralizes the toxin. Also interacts with toxins RelE and RelK in vitro, in M.smegmatis coexpression with non-cognate toxins increases the toxicity of RelE but not of RelK.

Its function is as follows. Antitoxin component of a type II toxin-antitoxin (TA) system. Upon expression in M.smegmatis neutralizes the effect of toxin RelE2. Induces its own promoter, in combination with RelG represses its own promoter. Has been seen to bind DNA in complex with toxin RelG but not alone. The protein is Antitoxin RelF (relF) of Mycobacterium tuberculosis (strain ATCC 25618 / H37Rv).